The sequence spans 420 residues: MIOREX complex component 9 (420 aa).

The next 2 helical transmembrane spans lie at 125-145 (VYKVSPFFIIFATASIFTFIL) and 149-169 (IVVIPLIFHFFFPLLIMFFFF).

In terms of assembly, associates with the mitochondrial ribosome.

Its subcellular location is the mitochondrion. It localises to the mitochondrion membrane. Functionally, component of MIOREX complexes, large expressome-like assemblies of ribosomes with factors involved in all the steps of post-transcriptional gene expression. In Saccharomyces cerevisiae (strain ATCC 204508 / S288c) (Baker's yeast), this protein is MIOREX complex component 9.